The chain runs to 685 residues: Putative mannosyltransferase YycA (685 aa).

A run of 6 helical transmembrane segments spans residues 6 to 26 (FDAALILILLAAAFLNTYHIW), 68 to 88 (VLWIQTIFALIFGVHTWSVII), 109 to 129 (FGVGAARIAALVMALTPIAVA), 154 to 174 (AVKQGKLVWLLTAFALIGLAF), 176 to 196 (MKMMQAFMVLPAFVLFYLIAS), and 204 to 224 (IGSLLLSLVLLTGLSLSWAIA). The segment at 269–347 (MNAAGGGNMQ…GGGGGKSVNM (79 aa)) is disordered. The span at 277-286 (MQNQDNMQAP) shows a compositional bias: polar residues. Positions 287–303 (NGNGSSFSQNGNQSFGN) are enriched in low complexity. The segment covering 318–343 (LNGGGGTPPTGGNGPGNGGPGGGGGK) has biased composition (gly residues). The next 7 membrane-spanning stretches (helical) occupy residues 363 to 383 (LSGQISWMLPFSLIGLLGAII), 399 to 419 (TLFWAAWLVPVAGFFSIAGFF), 422 to 442 (YYLIMLAPPIAALSGIGWYTM), 455 to 475 (YLLPAAVLITAVFQVYILSAY), 479 to 499 (IGSVWMYVLGLLGLGITLALL), 513 to 533 (IISLCVLLLTPVYWSATPLLY), and 573 to 593 (TGEEYLFATLTTVTAAPYIIY). The tract at residues 652-685 (TSDEYSGSSSSTNSVQGMRRGPGGESQQTLYLVE) is disordered. Residues 654–665 (DEYSGSSSSTNS) show a composition bias toward low complexity. Polar residues predominate over residues 676–685 (ESQQTLYLVE).

It belongs to the glycosyltransferase 39 family.

The protein resides in the cell membrane. The sequence is that of Putative mannosyltransferase YycA (yycA) from Bacillus subtilis (strain 168).